We begin with the raw amino-acid sequence, 189 residues long: Chitin synthase 1 (189 aa).

Belongs to the chitin synthase family. Class I subfamily.

Its subcellular location is the cell membrane. The enzyme catalyses [(1-&gt;4)-N-acetyl-beta-D-glucosaminyl](n) + UDP-N-acetyl-alpha-D-glucosamine = [(1-&gt;4)-N-acetyl-beta-D-glucosaminyl](n+1) + UDP + H(+). Functionally, polymerizes chitin, a structural polymer of the cell wall and septum, by transferring the sugar moiety of UDP-GlcNAc to the non-reducing end of the growing chitin polymer. This Ajellomyces capsulatus (Darling's disease fungus) protein is Chitin synthase 1 (CHS1).